Reading from the N-terminus, the 591-residue chain is Putative BTB/POZ domain-containing protein At5g13600 (591 aa).

Positions 28-95 constitute a BTB domain; that stretch reads PDVMIQVVDE…CYGVRIEVTP (68 aa). The NPH3 domain occupies 208-493; it reads NWWFNDVSSF…VQVLFFEQMR (286 aa). Phosphotyrosine is present on tyrosine 434.

Belongs to the NPH3 family.

Its pathway is protein modification; protein ubiquitination. May act as a substrate-specific adapter of an E3 ubiquitin-protein ligase complex (CUL3-RBX1-BTB) which mediates the ubiquitination and subsequent proteasomal degradation of target proteins. The chain is Putative BTB/POZ domain-containing protein At5g13600 from Arabidopsis thaliana (Mouse-ear cress).